The primary structure comprises 157 residues: Transcription antitermination protein NusB (157 aa).

The protein belongs to the NusB family.

In terms of biological role, involved in transcription antitermination. Required for transcription of ribosomal RNA (rRNA) genes. Binds specifically to the boxA antiterminator sequence of the ribosomal RNA (rrn) operons. The sequence is that of Transcription antitermination protein NusB from Xylella fastidiosa (strain Temecula1 / ATCC 700964).